A 102-amino-acid chain; its full sequence is Auxin-responsive protein SAUR68 (102 aa).

The protein belongs to the ARG7 family.

It is found in the cell membrane. In terms of biological role, may promote auxin-stimulated organ elongation, such as hypocotyls, stamen filaments and petals. This Arabidopsis thaliana (Mouse-ear cress) protein is Auxin-responsive protein SAUR68.